Reading from the N-terminus, the 429-residue chain is Proton/sodium-glutamate symport protein (429 aa).

The Cytoplasmic portion of the chain corresponds to 1–5; the sequence is MKRIK. A helical membrane pass occupies residues 6 to 26; the sequence is FGLATQIFVGLILGVIVGVIW. Over 27–45 the chain is Extracellular; it reads YGNPALPTYLQPIGDLFLR. Residues 46–66 form a helical membrane-spanning segment; it reads LIKMIVIPIVVSSLIIGVAGA. The Cytoplasmic portion of the chain corresponds to 67–79; the sequence is GNGKQVGKLGFRT. The helical transmembrane segment at 80-100 threads the bilayer; that stretch reads ILYFEIITTFAIILGLALANI. Over 101 to 150 the chain is Extracellular; it reads FHPGTGVNIHEAQKSDISQYVETEKEQSNKSVAETFLHIVPTNFFQSLVE. Residues 151-171 form a helical membrane-spanning segment; it reads GDLLAIICFTVLFALGISAIG. Topologically, residues 172-190 are cytoplasmic; that stretch reads ERGKPVLAFFEGVSHAMFH. Residues 191 to 211 form a helical membrane-spanning segment; that stretch reads VVNLVMKVAPFGVFALIGVTV. The Extracellular segment spans residues 212-224; it reads SKFGLGSLISLGK. Residues 225 to 245 traverse the membrane as a helical segment; it reads LVGLVYVALAFFLIVIFGIVA. A topological domain (cytoplasmic) is located at residue lysine 246. Residues 247–267 traverse the membrane as a helical segment; it reads IAGISIFKFLAYMKDEILLAF. Over 268–290 the chain is Extracellular; that stretch reads STSSSETVLPRIMEKMEKIGCPK. The helical transmembrane segment at 291 to 311 threads the bilayer; it reads GIVSFVIPIGYTFNLDGSVLY. At 312–321 the chain is on the cytoplasmic side; the sequence is QSIAALFLAQ. Residues 322–342 traverse the membrane as a helical segment; the sequence is VYGIDLTIWHQITLVLVLMVT. Residues 343 to 353 lie on the Extracellular side of the membrane; that stretch reads SKGMAAVPGTS. The chain crosses the membrane as a helical span at residues 354–374; sequence FVVLLATLGTIGVPAEGLAFI. The Cytoplasmic segment spans residues 375 to 429; that stretch reads AGVDRIMDMARTVVNLTGNALAAVVMSKWEGMFNPAKAETVMSQSKTEQNATISG.

Belongs to the dicarboxylate/amino acid:cation symporter (DAACS) (TC 2.A.23) family. In terms of assembly, homotrimer. Interacts with FloT.

The protein localises to the cell membrane. It is found in the membrane raft. Its function is as follows. This carrier protein is part of the Na(+)-dependent, binding-protein-independent glutamate-aspartate transport system. The sequence is that of Proton/sodium-glutamate symport protein (gltT) from Bacillus subtilis (strain 168).